The sequence spans 830 residues: Beta-glucosidase A (830 aa).

D769 is a catalytic residue.

Belongs to the glycosyl hydrolase 3 family.

The catalysed reaction is Hydrolysis of terminal, non-reducing beta-D-glucosyl residues with release of beta-D-glucose.. Functionally, b.fibrisolvens beta-glucosidase hydrolyzes cellobiose to a limited extent, cellotriose to cellobiose and glucose, and cellotetraose and cellopentaose to predominantly glucose. The sequence is that of Beta-glucosidase A (bglA) from Butyrivibrio fibrisolvens.